Reading from the N-terminus, the 681-residue chain is Serine/threonine-protein kinase PAK 6 (681 aa).

3 disordered regions span residues 1–30 (MFRKKKKKRPEISAPQNFQHRVHTSFDPKE), 200–256 (QSSP…ESSL), and 268–355 (TAAT…PRTW). Residues 12 to 25 (ISAPQNFQHRVHTS) form the CRIB domain. The interval 26-406 (FDPKEGKFVG…VVDQGDPRLL (381 aa)) is linker. Low complexity-rich tracts occupy residues 201 to 212 (SSPPGASPPTGT) and 268 to 278 (TAATAPPSSSK). Residues 308-333 (SLPSDQPVGTFSPLTTSDTSSPQKSL) are compositionally biased toward polar residues. In terms of domain architecture, Protein kinase spans 407-658 (LDSYVKIGEG…AQELLDHPFL (252 aa)). ATP contacts are provided by residues 413-421 (IGEGSTGIV) and Lys-436. Asp-526 functions as the Proton acceptor in the catalytic mechanism. Ser-560 carries the post-translational modification Phosphoserine; by autocatalysis.

It belongs to the protein kinase superfamily. STE Ser/Thr protein kinase family. STE20 subfamily. In terms of assembly, interacts tightly with GTP-bound but not GDP-bound CDC42/p21 and RAC1. Interacts with the androgen receptor AR. Interacts with IQGAP1 and PPM1B. Autophosphorylated. Phosphorylated by MAP2K6/MAPKK6, leading to PAK6 activation.

The protein resides in the cytoplasm. Its subcellular location is the nucleus. It catalyses the reaction L-seryl-[protein] + ATP = O-phospho-L-seryl-[protein] + ADP + H(+). The catalysed reaction is L-threonyl-[protein] + ATP = O-phospho-L-threonyl-[protein] + ADP + H(+). Functionally, serine/threonine protein kinase that plays a role in the regulation of gene transcription. The kinase activity is induced by various effectors including AR or MAP2K6/MAPKK6. Phosphorylates the DNA-binding domain of androgen receptor/AR and thereby inhibits AR-mediated transcription. Also inhibits ESR1-mediated transcription. May play a role in cytoskeleton regulation by interacting with IQGAP1. May protect cells from apoptosis through phosphorylation of BAD. This Pongo abelii (Sumatran orangutan) protein is Serine/threonine-protein kinase PAK 6 (PAK6).